Consider the following 221-residue polypeptide: 3-isopropylmalate dehydratase small subunit (221 aa).

It belongs to the LeuD family. LeuD type 1 subfamily. Heterodimer of LeuC and LeuD.

The catalysed reaction is (2R,3S)-3-isopropylmalate = (2S)-2-isopropylmalate. Its pathway is amino-acid biosynthesis; L-leucine biosynthesis; L-leucine from 3-methyl-2-oxobutanoate: step 2/4. Its function is as follows. Catalyzes the isomerization between 2-isopropylmalate and 3-isopropylmalate, via the formation of 2-isopropylmaleate. The chain is 3-isopropylmalate dehydratase small subunit from Nitrosomonas europaea (strain ATCC 19718 / CIP 103999 / KCTC 2705 / NBRC 14298).